Consider the following 339-residue polypeptide: D-erythrose-4-phosphate dehydrogenase (339 aa).

Residues 12–13 and arginine 81 each bind NAD(+); that span reads RI. Residues 154–156, arginine 200, 213–214, and arginine 236 each bind substrate; these read SCT and TK. Cysteine 155 (nucleophile) is an active-site residue. Residue asparagine 318 participates in NAD(+) binding.

This sequence belongs to the glyceraldehyde-3-phosphate dehydrogenase family. Epd subfamily. As to quaternary structure, homotetramer.

The protein resides in the cytoplasm. The catalysed reaction is D-erythrose 4-phosphate + NAD(+) + H2O = 4-phospho-D-erythronate + NADH + 2 H(+). It participates in cofactor biosynthesis; pyridoxine 5'-phosphate biosynthesis; pyridoxine 5'-phosphate from D-erythrose 4-phosphate: step 1/5. In terms of biological role, catalyzes the NAD-dependent conversion of D-erythrose 4-phosphate to 4-phosphoerythronate. The polypeptide is D-erythrose-4-phosphate dehydrogenase (Escherichia coli O45:K1 (strain S88 / ExPEC)).